Here is a 492-residue protein sequence, read N- to C-terminus: Aspartyl/glutamyl-tRNA(Asn/Gln) amidotransferase subunit B (492 aa).

The protein belongs to the GatB/GatE family. GatB subfamily. As to quaternary structure, heterotrimer of A, B and C subunits.

The catalysed reaction is L-glutamyl-tRNA(Gln) + L-glutamine + ATP + H2O = L-glutaminyl-tRNA(Gln) + L-glutamate + ADP + phosphate + H(+). The enzyme catalyses L-aspartyl-tRNA(Asn) + L-glutamine + ATP + H2O = L-asparaginyl-tRNA(Asn) + L-glutamate + ADP + phosphate + 2 H(+). Allows the formation of correctly charged Asn-tRNA(Asn) or Gln-tRNA(Gln) through the transamidation of misacylated Asp-tRNA(Asn) or Glu-tRNA(Gln) in organisms which lack either or both of asparaginyl-tRNA or glutaminyl-tRNA synthetases. The reaction takes place in the presence of glutamine and ATP through an activated phospho-Asp-tRNA(Asn) or phospho-Glu-tRNA(Gln). In Bradyrhizobium diazoefficiens (strain JCM 10833 / BCRC 13528 / IAM 13628 / NBRC 14792 / USDA 110), this protein is Aspartyl/glutamyl-tRNA(Asn/Gln) amidotransferase subunit B.